The primary structure comprises 923 residues: Helicase POLQ-like (923 aa).

Positions 1–84 are disordered; that stretch reads MNRTPIRRCK…STVTPIQQKI (84 aa). Over residues 43 to 55 the composition is skewed to low complexity; that stretch reads STSPQSPSSSTEN. A Helicase ATP-binding domain is found at 178-349; that stretch reads DKRLLDGENC…ALRAFVYSTN (172 aa). 191-198 provides a ligand contact to ATP; that stretch reads LPTGAGKT. Residues 295–298 carry the DEAH box motif; that stretch reads DELH. Residues 392 to 596 enclose the Helicase C-terminal domain; that stretch reads GICQLLAKLI…CVVLKLAENI (205 aa).

Belongs to the helicase family. SKI2 subfamily.

It localises to the nucleus. The protein localises to the chromosome. The enzyme catalyses Couples ATP hydrolysis with the unwinding of duplex DNA by translocating in the 3'-5' direction.. It catalyses the reaction ATP + H2O = ADP + phosphate + H(+). In terms of biological role, single-stranded 3'-5' DNA helicase that plays a key role in homology-driven double-strand break (DSB) repair. Involved in different DSB repair mechanisms that are guided by annealing of extensive stretches of complementary bases at break ends, such as microhomology-mediated end-joining (MMEJ), single-strand annealing (SSA) or synthesis-dependent strand annealing (SDSA). The chain is Helicase POLQ-like from Caenorhabditis elegans.